Here is a 253-residue protein sequence, read N- to C-terminus: Short chain dehydrogenase ple7 (253 aa).

Residues 5–25 (IVIVTGASHGIGLATVNLLLA) form a helical membrane-spanning segment. Residues valine 8, arginine 116, tyrosine 148, lysine 152, and asparagine 184 each contribute to the NADP(+) site. Residue tyrosine 148 is the Proton acceptor of the active site. The active-site Lowers pKa of active site Tyr is lysine 152. An N-linked (GlcNAc...) asparagine glycan is attached at asparagine 187.

It belongs to the short-chain dehydrogenases/reductases (SDR) family.

The protein resides in the membrane. Its pathway is secondary metabolite biosynthesis; terpenoid biosynthesis. In terms of biological role, short chain dehydrogenase; part of the gene cluster that mediates the biosynthesis of pleuromutilin, a tricyclic diterpene showing antibacterial properties. The geranylgeranyl diphosphate (GGPP) synthase ple4 catalyzes the first step in pleuromutilin biosynthesis. GGPP is then substrate of the premutilin synthase (PS) ple3 to yield premutilin. Premutilin synthase is a bifunctional enzyme composed of the fusion of a class II diterpene cyclase (DTC) and a class I diterpene synthase (DTS), with the corresponding domains and active sites containing characteristic aspartate-rich motifs. GGPP is first converted to mutildienyl-diphosphate (MPP) at the class II DTC site. MPP is subsequently further cyclized at the class I DTS site, followed by a 1,5-hydride shift and addition of water prior to terminating deprotonation, to yield premutilin. The cytochrome P450 monooxygenases ple5 and ple6 hydroxylate premutilin at C-11 and C-3, respectively, producing 11-hydroxypremutilin and 3-hydroxypremutilin. The combination of the actions of both ple5 and ple6 leads to the production of 3,11-dihydroxypremutilin. The short chain dehydrogenase ple7 further converts 3,11-dihydroxypremutilin into mutilin. The acetyltransferase ple2 then acetylates mutilin to produce 14-O-acetylmutilin. Finally, the cytochrome P450 monooxygenase ple1 catalyzes hydroxylation on the alpha position of the acetyl side chain of 14-O-acetylmutilin to yield pleuromutilin. The polypeptide is Short chain dehydrogenase ple7 (Rhodocybe pseudopiperita (Clitopilus pseudopiperitus)).